Reading from the N-terminus, the 123-residue chain is Large ribosomal subunit protein uL14 (123 aa).

Belongs to the universal ribosomal protein uL14 family. As to quaternary structure, part of the 50S ribosomal subunit. Forms a cluster with proteins L3 and L19. In the 70S ribosome, L14 and L19 interact and together make contacts with the 16S rRNA in bridges B5 and B8.

Functionally, binds to 23S rRNA. Forms part of two intersubunit bridges in the 70S ribosome. This is Large ribosomal subunit protein uL14 from Wigglesworthia glossinidia brevipalpis.